The chain runs to 259 residues: Nodulation protein J (259 aa).

Residues 30–256 form the ABC transmembrane type-2 domain; sequence ASILGNLADP…LVSTALLRRR (227 aa). The next 6 membrane-spanning stretches (helical) occupy residues 32-52, 64-84, 116-136, 141-161, 174-194, and 228-248; these read ILGN…GLGV, AFLA…FETI, AWAA…AAML, WLAL…FASL, YFIF…GAVF, and IANV…PFLV.

The protein belongs to the ABC-2 integral membrane protein family. Lipooligosaccharide exporter (TC 3.A.1.102) subfamily. In terms of assembly, the complex is composed of two ATP-binding proteins (NodI) and two transmembrane proteins (NodJ).

Its subcellular location is the cell inner membrane. Part of the ABC transporter complex NodIJ involved in the export of the nodulation factors (Nod factors), the bacterial signal molecules that induce symbiosis and subsequent nodulation induction. Nod factors are LCO (lipo-chitin oligosaccharide), a modified beta-1,4-linked N-acetylglucosamine oligosaccharide. This subunit encodes the transporter. This chain is Nodulation protein J (nodJ), found in Rhizobium leguminosarum bv. viciae.